The chain runs to 508 residues: Arabinose import ATP-binding protein AraG (508 aa).

ABC transporter domains are found at residues 5–240 (LEFQ…MVGR) and 250–496 (ARTL…LPDA). Residue 37-44 (GENGAGKS) coordinates ATP.

It belongs to the ABC transporter superfamily. Arabinose importer (TC 3.A.1.2.2) family. In terms of assembly, the complex is composed of two ATP-binding proteins (AraG), two transmembrane proteins (AraH) and a solute-binding protein (AraF).

It localises to the cell inner membrane. It carries out the reaction L-arabinose(out) + ATP + H2O = L-arabinose(in) + ADP + phosphate + H(+). Its function is as follows. Part of the ABC transporter complex AraFGH involved in arabinose import. Responsible for energy coupling to the transport system. This Rhizobium meliloti (strain 1021) (Ensifer meliloti) protein is Arabinose import ATP-binding protein AraG.